Here is a 325-residue protein sequence, read N- to C-terminus: DNA-directed RNA polymerase subunit alpha (325 aa).

The tract at residues 1–231 (MQTSLLKPKI…DQLSVFAALE (231 aa)) is alpha N-terminal domain (alpha-NTD). The interval 246 to 325 (IDPILLRPVD…ENWPPAGLDK (80 aa)) is alpha C-terminal domain (alpha-CTD).

It belongs to the RNA polymerase alpha chain family. As to quaternary structure, homodimer. The RNAP catalytic core consists of 2 alpha, 1 beta, 1 beta' and 1 omega subunit. When a sigma factor is associated with the core the holoenzyme is formed, which can initiate transcription.

It catalyses the reaction RNA(n) + a ribonucleoside 5'-triphosphate = RNA(n+1) + diphosphate. Its function is as follows. DNA-dependent RNA polymerase catalyzes the transcription of DNA into RNA using the four ribonucleoside triphosphates as substrates. This chain is DNA-directed RNA polymerase subunit alpha, found in Paraburkholderia phytofirmans (strain DSM 17436 / LMG 22146 / PsJN) (Burkholderia phytofirmans).